The sequence spans 967 residues: Probable disease resistance protein At1g61190 (967 aa).

Residues 20–68 (RCLCGKGYIRNLEKNLRALQREMEDLRATQHEVQNKVAREESRHQQRLE) are a coiled coil. The disordered stretch occupies residues 132–153 (GNFDEVSQPPPRSEVEERPTQP). Positions 138–441 (SQPPPRSEVE…CEGFIGEDQV (304 aa)) constitute an NB-ARC domain. Residue 180–187 (GMGGVGKT) coordinates ATP. LRR repeat units lie at residues 516 to 537 (AVRR…SKCS), 538 to 559 (ELTT…FIRY), 562 to 585 (KLVV…SGLV), 586 to 608 (SLQY…KELK), and 609 to 631 (KLIF…SRLL).

Belongs to the disease resistance NB-LRR family.

Functionally, probable disease resistance protein. This Arabidopsis thaliana (Mouse-ear cress) protein is Probable disease resistance protein At1g61190.